We begin with the raw amino-acid sequence, 195 residues long: Thymidine kinase (195 aa).

Residues 15 to 22 and 91 to 94 contribute to the ATP site; these read GSMFSGKT and DEAN. The Proton acceptor role is filled by glutamate 92. Residues cysteine 148, cysteine 151, cysteine 186, and cysteine 189 each coordinate Zn(2+).

Belongs to the thymidine kinase family. Homotetramer.

The protein localises to the cytoplasm. It catalyses the reaction thymidine + ATP = dTMP + ADP + H(+). This chain is Thymidine kinase, found in Halobacterium salinarum (strain ATCC 29341 / DSM 671 / R1).